The following is a 298-amino-acid chain: MSNALYRGRFAPSPTGLLHAGSLSTAIGSYLEARSRGGEWLLRMEDLDPPREVPGAADDILRTLEAFGFEWDGEVVYQSRRHGLYRAALERLIASGRAYACCCTRKEIAATARRGLDGYVYPGTCRNGCPDGREGRAWRLRVDEGEWTAHDRLQGEHRQDLARDIGDFVLLRADGFWAYQLAVVVDDAEQGVTDIVRGADLLVSTPRQLAVYDALGQSAPGYCHLPVLTNAAGEKLSKQTLAPAISTRDAARQLREALAWLGHVPPADCGSLDELWPWAVANWSLSRVPAGPLQLPLS.

L-glutamate is bound by residues 9–13 and Glu45; that span reads RFAPS. The 'HIGH' region signature appears at 12–22; it reads PSPTGLLHAGS. The Zn(2+) site is built by Cys101, Cys103, Tyr121, and Cys125. Residues Tyr179 and Arg197 each contribute to the L-glutamate site. The 'KMSKS' region motif lies at 235–239; sequence KLSKQ. Lys238 serves as a coordination point for ATP.

Belongs to the class-I aminoacyl-tRNA synthetase family. GluQ subfamily. The cofactor is Zn(2+).

In terms of biological role, catalyzes the tRNA-independent activation of glutamate in presence of ATP and the subsequent transfer of glutamate onto a tRNA(Asp). Glutamate is transferred on the 2-amino-5-(4,5-dihydroxy-2-cyclopenten-1-yl) moiety of the queuosine in the wobble position of the QUC anticodon. This Chromobacterium violaceum (strain ATCC 12472 / DSM 30191 / JCM 1249 / CCUG 213 / NBRC 12614 / NCIMB 9131 / NCTC 9757 / MK) protein is Glutamyl-Q tRNA(Asp) synthetase.